Here is a 467-residue protein sequence, read N- to C-terminus: MPPKEDWEKYKAPLEDDDKKPDDDKIVPLTEGDIQVLKSYGAAPYAAKLKQTENDLKDIEARIKEKAGVKESDTGLAPSHLWDIMGDRQRLGEEHPLQVARCTKIIKGNGESDETTTDNNNSGNSNSNSNQQSTDADEDDEDAKYVINLKQIAKFVVGLGERVSPTDIEEGMRVGVDRSKYNIELPLPPRIDPSVTMMTVEEKPDVTYSDVGGCKDQIEKLREVVELPLLSPERFATLGIDPPKGILLYGPPGTGKTLCARAVANRTDATFIRVIGSELVQKYVGEGARMVRELFEMARTKKACIIFFDEIDAVGGARFDDGAGGDNEVQRTMLELITQLDGFDPRGNIKVMFATNRPNTLDPALLRPGRIDRKVEFSLPDLEGRANIFRIHSKSMSVERGIRWELISRLCPNSTGAELRSVCTEAGMFAIRARRKVATEKDFLKAVDKVISGYKKFSSTSRYMQYN.

2 disordered regions span residues 1–26 and 108–140; these read MPPK…DDKI and GNGE…DEDD. The segment covering 117-134 has biased composition (low complexity); the sequence is TDNNNSGNSNSNSNQQST. Phosphoserine is present on residues S164 and S231. 250 to 257 is an ATP binding site; sequence GPPGTGKT.

This sequence belongs to the AAA ATPase family. Interacts with UBR1 and CIC1. Post-translationally, the N-terminus is blocked.

The protein localises to the cytoplasm. It localises to the nucleus. In terms of biological role, the 26S proteasome is involved in the ATP-dependent degradation of ubiquitinated proteins. The regulatory (or ATPase) complex confers ATP dependency and substrate specificity to the 26S complex. The sequence is that of 26S proteasome regulatory subunit 7 homolog (RPT1) from Saccharomyces cerevisiae (strain ATCC 204508 / S288c) (Baker's yeast).